We begin with the raw amino-acid sequence, 177 residues long: Putative pre-16S rRNA nuclease (177 aa).

The tract at residues 1-20 is disordered; the sequence is MVATQQGPDRPGIDDPGRGR.

It belongs to the YqgF nuclease family.

Its subcellular location is the cytoplasm. Its function is as follows. Could be a nuclease involved in processing of the 5'-end of pre-16S rRNA. This chain is Putative pre-16S rRNA nuclease, found in Rhodococcus erythropolis (strain PR4 / NBRC 100887).